The primary structure comprises 222 residues: Cytidylate kinase (222 aa).

7-15 (GPAGAGKST) contributes to the ATP binding site.

This sequence belongs to the cytidylate kinase family. Type 1 subfamily.

It is found in the cytoplasm. The enzyme catalyses CMP + ATP = CDP + ADP. It catalyses the reaction dCMP + ATP = dCDP + ADP. The polypeptide is Cytidylate kinase (Carboxydothermus hydrogenoformans (strain ATCC BAA-161 / DSM 6008 / Z-2901)).